The following is a 187-amino-acid chain: Coiled-coil domain-containing protein 201 (187 aa).

Disordered stretches follow at residues 1–79 and 92–159; these read MEPG…PPAT and KESS…RAAA. The stretch at 111 to 131 forms a coiled coil; sequence LTQRQRQRQQQQQQQESLRAK. Residues 147 to 157 are compositionally biased toward basic residues; sequence GRKRRDPKKRA.

This Homo sapiens (Human) protein is Coiled-coil domain-containing protein 201.